The sequence spans 713 residues: Polyribonucleotide nucleotidyltransferase (713 aa).

The Mg(2+) site is built by D487 and D493. The KH domain occupies 554–613 (PRIEVMNIPVDKIREVIGSGGKVIREIVEKTGAKINIEDDGTVKIASASGKEIEAARKWI). The 69-residue stretch at 623–691 (GQIYEGTVVK…ERGKVRLSMK (69 aa)) folds into the S1 motif domain.

The protein belongs to the polyribonucleotide nucleotidyltransferase family. It depends on Mg(2+) as a cofactor.

It is found in the cytoplasm. It catalyses the reaction RNA(n+1) + phosphate = RNA(n) + a ribonucleoside 5'-diphosphate. Functionally, involved in mRNA degradation. Catalyzes the phosphorolysis of single-stranded polyribonucleotides processively in the 3'- to 5'-direction. In Agrobacterium fabrum (strain C58 / ATCC 33970) (Agrobacterium tumefaciens (strain C58)), this protein is Polyribonucleotide nucleotidyltransferase.